The following is a 1034-amino-acid chain: Glycine dehydrogenase (decarboxylating), mitochondrial (1034 aa).

A mitochondrion-targeting transit peptide spans M1 to T63. An N6-(pyridoxal phosphate)lysine modification is found at K770.

It belongs to the GcvP family. As to quaternary structure, homodimer. The glycine cleavage system is composed of four proteins: P, T, L and H. Pyridoxal 5'-phosphate serves as cofactor.

It localises to the mitochondrion. The catalysed reaction is N(6)-[(R)-lipoyl]-L-lysyl-[glycine-cleavage complex H protein] + glycine + H(+) = N(6)-[(R)-S(8)-aminomethyldihydrolipoyl]-L-lysyl-[glycine-cleavage complex H protein] + CO2. Its function is as follows. The glycine cleavage system catalyzes the degradation of glycine. The P protein binds the alpha-amino group of glycine through its pyridoxal phosphate cofactor; CO(2) is released and the remaining methylamine moiety is then transferred to the lipoamide cofactor of the H protein. This chain is Glycine dehydrogenase (decarboxylating), mitochondrial (GDCSP), found in Flaveria anomala (Yellowtops).